We begin with the raw amino-acid sequence, 121 residues long: Large ribosomal subunit protein bL12 (121 aa).

It belongs to the bacterial ribosomal protein bL12 family. As to quaternary structure, homodimer. Part of the ribosomal stalk of the 50S ribosomal subunit. Forms a multimeric L10(L12)X complex, where L10 forms an elongated spine to which 2 to 4 L12 dimers bind in a sequential fashion. Binds GTP-bound translation factors.

Functionally, forms part of the ribosomal stalk which helps the ribosome interact with GTP-bound translation factors. Is thus essential for accurate translation. This Pseudomonas fluorescens (strain SBW25) protein is Large ribosomal subunit protein bL12.